The primary structure comprises 234 residues: Glucosamine-6-phosphate deaminase (234 aa).

The active-site Proton acceptor; for enolization step is Asp62. Asn128 acts as the For ring-opening step in catalysis. His130 serves as the catalytic Proton acceptor; for ring-opening step. Catalysis depends on Glu135, which acts as the For ring-opening step.

Belongs to the glucosamine/galactosamine-6-phosphate isomerase family. NagB subfamily.

It catalyses the reaction alpha-D-glucosamine 6-phosphate + H2O = beta-D-fructose 6-phosphate + NH4(+). Its pathway is amino-sugar metabolism; N-acetylneuraminate degradation; D-fructose 6-phosphate from N-acetylneuraminate: step 5/5. Its function is as follows. Catalyzes the reversible isomerization-deamination of glucosamine 6-phosphate (GlcN6P) to form fructose 6-phosphate (Fru6P) and ammonium ion. The polypeptide is Glucosamine-6-phosphate deaminase (Streptococcus uberis (strain ATCC BAA-854 / 0140J)).